The sequence spans 234 residues: Leucyl/phenylalanyl-tRNA--protein transferase (234 aa).

Belongs to the L/F-transferase family.

It localises to the cytoplasm. The enzyme catalyses N-terminal L-lysyl-[protein] + L-leucyl-tRNA(Leu) = N-terminal L-leucyl-L-lysyl-[protein] + tRNA(Leu) + H(+). It catalyses the reaction N-terminal L-arginyl-[protein] + L-leucyl-tRNA(Leu) = N-terminal L-leucyl-L-arginyl-[protein] + tRNA(Leu) + H(+). It carries out the reaction L-phenylalanyl-tRNA(Phe) + an N-terminal L-alpha-aminoacyl-[protein] = an N-terminal L-phenylalanyl-L-alpha-aminoacyl-[protein] + tRNA(Phe). In terms of biological role, functions in the N-end rule pathway of protein degradation where it conjugates Leu, Phe and, less efficiently, Met from aminoacyl-tRNAs to the N-termini of proteins containing an N-terminal arginine or lysine. The chain is Leucyl/phenylalanyl-tRNA--protein transferase from Nitrosomonas eutropha (strain DSM 101675 / C91 / Nm57).